Here is a 1083-residue protein sequence, read N- to C-terminus: MHFFQTILRWKTAKGQKSVTFKKDDGPYSKGNKDPAGNDLALVSRRQSIPEEFRGVTIVELIKKEGSTLGLTISGGTDKDGKPRVSNLRPGGLAARSDQLNIGDYIKSVNGINLTKLRHEEIISLLKNVGERVVLEVEYELPPGTPDNSSAIIPKTIEITLCKEGNSFGFVMRGGAHEDWHKSRALVVTYVRPGGPADREGTLKVGDRLLCVDGISLHNITHTDALSILRQCSQEGVFQIEYDVALMDTVTNASGPLLVEIAKTPGSTLGISLSTGTHRNKQVIVIDKVKPASVVDRCGALHPGDHILSIDGTSTEHCTQMEATQLLASIIENVKLEILPAHHSRLPLRPPETVKVQKSDHHHCWDPCVNYCHTPHPGHCKTPTWNPTSNQDYCKSLVAANFSSSSVAGTPGFSSQNSNTLPRTVHPMSPRTTMNRRRQKRKDHKSSLSLASSTVGPGGQIIHTESTEIILRGDPLNGFGIQLQGGIFATETLSSPPLIRFIEPDSPAERCGLLQVGDRLLSINGILTEDGTLEEANQLLRDAALSNKVALEIEFDVAESVVPSSGTFHVKLPKRKGVELGITISSSRKPGEPLIISDIKKGSVAHRTGTLEPGDKLLAIDNIRLDNCSMEDAVQILRQCEDLVKLKIRKDEDNSDEQETSGAIIYTVELKRYGGPLGITISGTEEPFDPIVISGLTKRGLAERTGAIHIGDRILAINNISLKGKPLSEAIHLLQMAGETVTLKIKKQTERIFPQRLSDSMNEGSDPEDDLTDSQKTSKLSEIYSTTVPSVDSALESWDGSGIDAGYGSQGTYVPQAVGISLHPHEWRTSRQKSNTPPVEHRKSYPFLDGSFNEQDWEKPTRYPSQPNGLETDHDDSFWRVFGEALEDLETCGQSELLREIEASIMTGSVQDLGLDSSQILLENSSQGGHVLFRRGSHHISSNSPKKENKLSQDARSKKEEVHNAQSLTTELLKVTVQKDMDTDDFGFSVSDGLLEKGVYVNMIRPGGPADRSGLKTYDQILQVNHVRTRDFDCCLTVPLLSDAGDRLDLVISRGLSIKAEEMGVEQIKGPLRMETQTSTKTL.

PDZ domains lie at 58 to 141, 156 to 244, and 258 to 342; these read IVEL…EYEL, TIEI…EYDV, and LVEI…LPAH. Over residues 408–422 the composition is skewed to polar residues; that stretch reads AGTPGFSSQNSNTLP. Residues 408–460 are disordered; that stretch reads AGTPGFSSQNSNTLPRTVHPMSPRTTMNRRRQKRKDHKSSLSLASSTVGPGGQ. Positions 434-444 are enriched in basic residues; the sequence is MNRRRQKRKDH. PDZ domains are found at residues 468 to 555, 569 to 652, and 667 to 749; these read EIIL…EIEF, HVKL…RKDE, and TVEL…KKQT. 3 disordered regions span residues 754–783, 853–872, and 936–965; these read PQRL…LSEI, NEQD…GLET, and GSHH…VHNA. Residues 774-783 show a composition bias toward polar residues; it reads SQKTSKLSEI. The segment covering 945–963 has biased composition (basic and acidic residues); that stretch reads PKKENKLSQDARSKKEEVH. Positions 974–1056 constitute a PDZ 7 domain; sequence KVTVQKDMDT…RLDLVISRGL (83 aa).

It belongs to the GRIP2 family. Enriched in the mitochondrial cloud of stage I oocytes, before becoming concentrated at the tip of the vegetal cortex in stage II oocytes. Expression becomes localized to the germ plasm of stage III-IV oocytes and early cleavage stages. At the tailbud stage, localizes to the migrating primordial germ cells (PGCs) until PGC migration is complete (stage 40), at which point expression disappears. In the adult, expressed in the brain, ovary, eye, muscle, spinal cord and very weakly in adipocytes.

The protein resides in the cytoplasm. In terms of biological role, plays an important role in primordial germ cell (PGC) maintenance and efficiency of PGC migration. This chain is Glutamate receptor-interacting protein 2, found in Xenopus laevis (African clawed frog).